The sequence spans 360 residues: Photosystem II protein D1 2 (360 aa).

A run of 3 helical transmembrane segments spans residues 29–46 (YVGW…TATI), 118–133 (HFLI…EWEL), and 142–156 (WICV…AATA). Residue His118 coordinates chlorophyll a. Tyr126 lines the pheophytin a pocket. Asp170 and Glu189 together coordinate [CaMn4O5] cluster. Residues 197–218 (FHMLGVAGVFGGSLFSAMHGSL) traverse the membrane as a helical segment. His198 serves as a coordination point for chlorophyll a. Residues His215 and 264-265 (SF) contribute to the a quinone site. His215 serves as a coordination point for Fe cation. His272 contributes to the Fe cation binding site. A helical transmembrane segment spans residues 274–288 (FLAAWPVVGIWFTSL). Residues His332, Glu333, Asp342, and Ala344 each contribute to the [CaMn4O5] cluster site. Positions 345–360 (AGEATPVALTAPAING) are excised as a propeptide.

Belongs to the reaction center PufL/M/PsbA/D family. As to quaternary structure, PSII is composed of 1 copy each of membrane proteins PsbA, PsbB, PsbC, PsbD, PsbE, PsbF, PsbH, PsbI, PsbJ, PsbK, PsbL, PsbM, PsbT, PsbX, PsbY, PsbZ, Psb30/Ycf12, peripheral proteins PsbO, CyanoQ (PsbQ), PsbU, PsbV and a large number of cofactors. It forms dimeric complexes. The D1/D2 heterodimer binds P680, chlorophylls that are the primary electron donor of PSII, and subsequent electron acceptors. It shares a non-heme iron and each subunit binds pheophytin, quinone, additional chlorophylls, carotenoids and lipids. D1 provides most of the ligands for the Mn4-Ca-O5 cluster of the oxygen-evolving complex (OEC). There is also a Cl(-1) ion associated with D1 and D2, which is required for oxygen evolution. The PSII complex binds additional chlorophylls, carotenoids and specific lipids. is required as a cofactor. Post-translationally, tyr-161 forms a radical intermediate that is referred to as redox-active TyrZ, YZ or Y-Z. C-terminally processed by CtpA; processing is essential to allow assembly of the oxygen-evolving complex and thus photosynthetic growth.

The protein localises to the cellular thylakoid membrane. The enzyme catalyses 2 a plastoquinone + 4 hnu + 2 H2O = 2 a plastoquinol + O2. Functionally, photosystem II (PSII) is a light-driven water:plastoquinone oxidoreductase that uses light energy to abstract electrons from H(2)O, generating O(2) and a proton gradient subsequently used for ATP formation. It consists of a core antenna complex that captures photons, and an electron transfer chain that converts photonic excitation into a charge separation. The D1/D2 (PsbA/PsbD) reaction center heterodimer binds P680, the primary electron donor of PSII as well as several subsequent electron acceptors. The chain is Photosystem II protein D1 2 from Synechococcus elongatus (strain ATCC 33912 / PCC 7942 / FACHB-805) (Anacystis nidulans R2).